A 198-amino-acid polypeptide reads, in one-letter code: MSRLENLTSKIIKDSEEKAKIILDEAKREEEKIMLGQKQEGESIKSKIIEKAYLESKNRKERIISNSHLFVRNRKLEAKQEVIDKVYKEALNKLAKLNKEEYLNFIKDSILALEIYGDEEIILSQDEKYINKETIEEINKELKSKGKKGEIKISDKKRDFRGGFILNKDGIEINNTFEALILSLKDDLEPVIIDTLFS.

The protein belongs to the V-ATPase E subunit family.

Its function is as follows. Produces ATP from ADP in the presence of a proton gradient across the membrane. The sequence is that of V-type ATP synthase subunit E 1 from Clostridium tetani (strain Massachusetts / E88).